Reading from the N-terminus, the 124-residue chain is Small ribosomal subunit protein uS13 (124 aa).

The span at 93-117 (KNLPVRGQRTRTNARTRKGPRKTVA) shows a compositional bias: basic residues. The interval 93-124 (KNLPVRGQRTRTNARTRKGPRKTVANKKIESK) is disordered.

It belongs to the universal ribosomal protein uS13 family. Part of the 30S ribosomal subunit. Forms a loose heterodimer with protein S19. Forms two bridges to the 50S subunit in the 70S ribosome.

Located at the top of the head of the 30S subunit, it contacts several helices of the 16S rRNA. In the 70S ribosome it contacts the 23S rRNA (bridge B1a) and protein L5 of the 50S subunit (bridge B1b), connecting the 2 subunits; these bridges are implicated in subunit movement. Contacts the tRNAs in the A and P-sites. The sequence is that of Small ribosomal subunit protein uS13 from Mycoplasma genitalium (strain ATCC 33530 / DSM 19775 / NCTC 10195 / G37) (Mycoplasmoides genitalium).